The sequence spans 510 residues: Fumarate hydratase, mitochondrial (510 aa).

The transit peptide at Met-1–Met-44 directs the protein to the mitochondrion. N6-acetyllysine; alternate occurs at positions 61, 66, and 80. N6-succinyllysine; alternate is present on residues Lys-61, Lys-66, and Lys-80. Residues Thr-85 and Thr-90 each carry the phosphothreonine modification. Position 94 is an N6-acetyllysine (Lys-94). N6-acetyllysine; alternate is present on residues Lys-115 and Lys-122. N6-succinyllysine; alternate occurs at positions 115 and 122. Substrate is bound by residues Ser-145 to Thr-147, His-176 to Asp-179, and Ser-186 to Asn-188. Lys-213 carries the post-translational modification N6-acetyllysine. Lys-223 carries the N6-acetyllysine; alternate modification. N6-succinyllysine; alternate is present on Lys-223. Thr-234 contacts substrate. His-235 serves as the catalytic Proton donor/acceptor. A Phosphothreonine; by PRKDC modification is found at Thr-236. Lys-256 bears the N6-acetyllysine mark. Lys-292 carries the post-translational modification N6-acetyllysine; alternate. The residue at position 292 (Lys-292) is an N6-succinyllysine; alternate. Ser-365 is a catalytic residue. Residues Ser-366 and Lys-371–Asn-373 contribute to the substrate site. The residue at position 366 (Ser-366) is a Phosphoserine. N6-succinyllysine occurs at positions 467 and 473. An N6-acetyllysine modification is found at Lys-502.

The protein belongs to the class-II fumarase/aspartase family. Fumarase subfamily. As to quaternary structure, homotetramer. Interacts with H2AZ1. In terms of processing, phosphorylation at Thr-236 by PRKDC in response to DNA damage promotes translocation to the nucleus and recruitment to DNA double-strand breaks (DSBs). As to expression, expressed in red blood cells; underexpressed in red blood cells (cytoplasm) of patients with hereditary non-spherocytic hemolytic anemia of unknown etiology.

The protein resides in the mitochondrion. The protein localises to the cytoplasm. It localises to the cytosol. It is found in the nucleus. Its subcellular location is the chromosome. It catalyses the reaction (S)-malate = fumarate + H2O. Its pathway is carbohydrate metabolism; tricarboxylic acid cycle; (S)-malate from fumarate: step 1/1. Functionally, catalyzes the reversible stereospecific interconversion of fumarate to L-malate. Experiments in other species have demonstrated that specific isoforms of this protein act in defined pathways and favor one direction over the other. Catalyzes the hydration of fumarate to L-malate in the tricarboxylic acid (TCA) cycle to facilitate a transition step in the production of energy in the form of NADH. In terms of biological role, catalyzes the dehydration of L-malate to fumarate. Fumarate metabolism in the cytosol plays a role during urea cycle and arginine metabolism; fumarate being a by-product of the urea cycle and amino-acid catabolism. Also plays a role in DNA repair by promoting non-homologous end-joining (NHEJ). In response to DNA damage and phosphorylation by PRKDC, translocates to the nucleus and accumulates at DNA double-strand breaks (DSBs): acts by catalyzing formation of fumarate, an inhibitor of KDM2B histone demethylase activity, resulting in enhanced dimethylation of histone H3 'Lys-36' (H3K36me2). The sequence is that of Fumarate hydratase, mitochondrial from Homo sapiens (Human).